Reading from the N-terminus, the 193-residue chain is Ion-translocating oxidoreductase complex subunit A (193 aa).

Helical transmembrane passes span 4 to 24, 39 to 59, 71 to 91, 102 to 122, 134 to 154, and 171 to 191; these read FLLV…KFLG, IGMG…CWLV, FLRI…IETV, ALGI…LPLM, TLSG…FAGM, and PIAF…AGLV.

Belongs to the NqrDE/RnfAE family. As to quaternary structure, the complex is composed of six subunits: RnfA, RnfB, RnfC, RnfD, RnfE and RnfG.

It localises to the cellular chromatophore membrane. In terms of biological role, part of a membrane-bound complex that couples electron transfer with translocation of ions across the membrane. Required for nitrogen fixation. Involved in electron transfer to nitrogenase. The protein is Ion-translocating oxidoreductase complex subunit A of Rhodobacter capsulatus (Rhodopseudomonas capsulata).